The following is a 729-amino-acid chain: Ubiquitin carboxyl-terminal hydrolase BAP1 (729 aa).

Residues Gly-4 to Pro-235 form the UCH catalytic domain. The Arg-finger motif signature appears at Arg-56 to Arg-60. Residue Cys-91 is the Nucleophile of the active site. His-169 functions as the Proton donor in the catalytic mechanism. Ser-292 carries the phosphoserine modification. The tract at residues Ala-301–Thr-351 is disordered. An HBM-like motif motif is present at residues Asn-363–Tyr-366. 2 positions are modified to phosphoserine: Ser-369 and Ser-395. 2 disordered regions span residues Gln-372 to Gly-435 and Ser-464 to Thr-524. Over residues Ser-395–Val-409 the composition is skewed to acidic residues. Polar residues predominate over residues Thr-480–Thr-524. Phosphothreonine is present on Thr-493. 4 positions are modified to phosphoserine: Ser-521, Ser-537, Ser-585, and Ser-597. Positions Leu-575–Ser-623 are disordered. The segment covering Ser-582–Pro-598 has biased composition (polar residues). The interval Ser-596 to Ser-721 is interaction with BRCA1. The span at Val-599–Gly-614 shows a compositional bias: basic and acidic residues. Residues Leu-636–Lys-656 adopt a coiled-coil conformation. The interval Glu-642–Gly-686 is interaction with YY1. The region spanning Asn-670–Val-698 is the ULD domain. Residues Arg-699–Arg-701 are interaction with nucleosomal DNA forming a DNA clamp with ASXL1. The Classical bipartite Nuclear localization signal (NLS) motif lies at Arg-699 to Arg-722. A disordered region spans residues Gly-703–Gln-729. Residues Arg-713–Gln-729 form a positively charged C-terminal extension (CTE) region. The Non-classical PY-nuclear localization signal (PY-NLS) motif lies at Arg-717–Tyr-724.

The protein belongs to the peptidase C12 family. BAP1 subfamily. As to quaternary structure, core component of the polycomb repressive deubiquitinase (PR-DUB) complex, at least composed of BAP1, one of ASXL1, ASXL2 or (probably) ASXL3, and one of MBD5 or MBD6. The PR-DUB core associates with a number of accessory proteins, including FOXK1, FOXK2, KDM1B, HCFC1, YY1 and OGT; KDM1B specifically associates with ASXL2 PR-DUB complexes. The BAP1 deubiquitinase activity is not required for PR-DUB assembly. Homodimerizes (via coiled-coil hinge-region between the UCH and ULD domains) to mediate assembly of 2 copies of the BAP1-ASXL heterodimer into a bisymmetric tetramer; dimerization enhances association with nucleosomes. The PR-DUB complex associates with nucleosomes to mediate deubiquitination of 'lys-120' of histone H2AK118ub1 substrates; the association requires the positively charged C-terminal tail of BAP1. Interacts (via ULD domain) with ASXL1 (via DEUBAD domain); the interaction is direct and forms a ubiquitin binding cleft. The interaction with ASXL1 stabilizes BAP1 but is not required for nucleosome binding. Associates (via C-terminus) with nucleosome and chromatosome complexes through direct interaction with DNA and the histone3/4 dimer; this association displaces the histone-2A C-terminal tail, extending and orienting the H2AK118ub1 substrate towards the BAP1 deubiquitinase active site. Also interacts (via arginine finger) directly with the histone H2A-H2B acidic patch; this interaction is not critical for nucleosome-chromatosome association but may play a role in orienting the H2AK118ub1 substrate towards the PR-DUB complex active site. Interacts with BRCA1 (via the RING finger). Interacts (via HBM-like motif) with HCFC1. Interacts (via a C-terminal region overlapping the ULD domain) with YY1; the interaction is direct and requires the interaction with HCFC1. Interacts (when phosphorylated at Thr-493) with FOXK1. Interacts (when phosphorylated at Thr-493) with FOXK2; leading to recruitment of the PR-DUB complex and repression of FOXK2 target genes. Interacts (via non-classical PY-NLS) with TNPO1/transportin-1 (via HEAT repeats 8-12); the interaction is direct, mediates BAP1 nuclear localization and disrupts BAP1 homodimerization. Interacts (via C-terminus) with KPNA1/importin alpha5 and KPNA2/importin alpha1; these interactions can contribute to BAP1 nuclear localization but are less important than the interaction with TNPO1/transportin-1. The interaction with TNPO1/transportin-1 disrupts homodimerization and blocks ubiquitination by UBE2O. Ubiquitinated: monoubiquitinated at multiple sites within its nuclear localization signal (NLS) BY UBE2O, leading to cytoplasmic retention. Able to mediate autodeubiquitination via intramolecular interactions to counteract cytoplasmic retention. Monoubiquitinated on at least 4 sites near or within its PY-NLS. In terms of tissue distribution, highly expressed in testis, placenta and ovary. Expressed in breast. levels in the placenta increase over the course of pregnancy.

Its subcellular location is the cytoplasm. The protein localises to the nucleus. It localises to the chromosome. It carries out the reaction Thiol-dependent hydrolysis of ester, thioester, amide, peptide and isopeptide bonds formed by the C-terminal Gly of ubiquitin (a 76-residue protein attached to proteins as an intracellular targeting signal).. Its function is as follows. Deubiquitinating enzyme that plays a key role in chromatin by mediating deubiquitination of histone H2A and HCFC1. Catalytic component of the polycomb repressive deubiquitinase (PR-DUB) complex, a complex that specifically mediates deubiquitination of histone H2A monoubiquitinated at 'Lys-120' (H2AK119ub1). Does not deubiquitinate monoubiquitinated histone H2B. The PR-DUB complex is an epigenetic regulator of gene expression and acts as a transcriptional coactivator, affecting genes involved in development, cell communication, signaling, cell proliferation and cell viability. Antagonizes PRC1 mediated H2AK119ub1 monoubiquitination. As part of the PR-DUB complex, associates with chromatin enriched in histone marks H3K4me1, H3K4me3, and H3K27Ac, but not in H3K27me3. Recruited to specific gene-regulatory regions by YY1. Acts as a regulator of cell growth by mediating deubiquitination of HCFC1 N-terminal and C-terminal chains, with some specificity toward 'Lys-48'-linked polyubiquitin chains compared to 'Lys-63'-linked polyubiquitin chains. Deubiquitination of HCFC1 does not lead to increase stability of HCFC1. Interferes with the BRCA1 and BARD1 heterodimer activity by inhibiting their ability to mediate ubiquitination and autoubiquitination. It however does not mediate deubiquitination of BRCA1 and BARD1. Able to mediate autodeubiquitination via intramolecular interactions to counteract monoubiquitination at the nuclear localization signal (NLS), thereby protecting it from cytoplasmic sequestration. Negatively regulates epithelial-mesenchymal transition (EMT) of trophoblast stem cells during placental development by regulating genes involved in epithelial cell integrity, cell adhesion and cytoskeletal organization. This is Ubiquitin carboxyl-terminal hydrolase BAP1 from Homo sapiens (Human).